Here is a 43-residue protein sequence, read N- to C-terminus: Defensin (43 aa).

Cystine bridges form between cysteine 3–cysteine 34, cysteine 20–cysteine 39, and cysteine 24–cysteine 41.

The protein belongs to the invertebrate defensin family. Type 1 subfamily.

The protein localises to the secreted. Its function is as follows. Antibacterial peptide. Affects Gram-positive bacteria M.luteus, B.megaterium, A.viridans, S.aureus and S.saprophyticus. Moderate activity against P.acidilactici and B.subtilis QB935. Also affects Gram-negative bacterium, D22 form of E.coli. This is Defensin from Pyrrhocoris apterus (Sap sucking bug).